The following is a 224-amino-acid chain: uncharacterized protein (224 aa).

A helical transmembrane segment spans residues 21 to 41 (LTVILIIPIVYLGVCGCFEIV).

The protein localises to the membrane. This is an uncharacterized protein from Methanocaldococcus jannaschii (strain ATCC 43067 / DSM 2661 / JAL-1 / JCM 10045 / NBRC 100440) (Methanococcus jannaschii).